A 464-amino-acid chain; its full sequence is Vitamin D3 hydroxylase-associated protein (464 aa).

Active-site charge relay system residues include lysine 150 and serine 225. Residue serine 249 is the Acyl-ester intermediate of the active site.

It belongs to the amidase family. As to expression, kidney.

Its subcellular location is the mitochondrion inner membrane. Its function is as follows. May have a vitamin D3 hydroxylase regulatory function. This Gallus gallus (Chicken) protein is Vitamin D3 hydroxylase-associated protein.